Consider the following 258-residue polypeptide: Type III pantothenate kinase (258 aa).

Residue 9-16 participates in ATP binding; sequence DIGNTSVN. 110–113 lines the substrate pocket; it reads GADR. The active-site Proton acceptor is the Asp-112. Asp-132 serves as a coordination point for K(+). Thr-135 serves as a coordination point for ATP. Residue Thr-187 coordinates substrate.

This sequence belongs to the type III pantothenate kinase family. In terms of assembly, homodimer. NH4(+) is required as a cofactor. K(+) serves as cofactor.

It is found in the cytoplasm. It carries out the reaction (R)-pantothenate + ATP = (R)-4'-phosphopantothenate + ADP + H(+). Its pathway is cofactor biosynthesis; coenzyme A biosynthesis; CoA from (R)-pantothenate: step 1/5. In terms of biological role, catalyzes the phosphorylation of pantothenate (Pan), the first step in CoA biosynthesis. The chain is Type III pantothenate kinase from Dehalococcoides mccartyi (strain ATCC BAA-2266 / KCTC 15142 / 195) (Dehalococcoides ethenogenes (strain 195)).